The chain runs to 447 residues: Protein cortex (447 aa).

6 WD repeats span residues 108–148 (TYSY…IGHG), 149–188 (FAEY…KIMS), 198–237 (NMNC…ISWR), 281–325 (DSDW…VRDT), 344–380 (GELV…DQWG), and 384–423 (SGLD…NKMK). Residues 384–395 (SGLDRVRTMIFS) carry the D-box motif.

Belongs to the WD repeat CORT family.

The protein localises to the cytoplasm. Controls wing pigmentation patterning by regulating scale cell development, thereby playing a key role in mimicry and crypsis. Probably acts as an activator of the anaphase promoting complex/cyclosome (APC/C) that promotes the ubiquitin ligase activity and substrate specificity of the APC/C. The protein is Protein cortex of Heliconius melpomene (Postman butterfly).